Reading from the N-terminus, the 1529-residue chain is MSSDIRDVEERNSRSSSSSSSSNSAAQSIGQHPYRGFDSEAAERVHELARTLTSQSLLYTANSNNSSSSNHNAHNADSRSVFSTDMEGVNPVFTNPDTPGYNPKLDPNSDQFSSTAWVQNMANICTSDPDFYKPYSLGCVWKNLSASGDSADVSYQSTFANIVPKLLTKGLRLLKPSKEEDTFQILKPMDGCLNPGELLVVLGRPGSGCTTLLKSISSNSHGFKIAKDSIVSYNGLSSSDIRKHYRGEVVYNAESDIHLPHLTVYQTLFTVARMKTPQNRIKGVDREAYANHVTEVAMATYGLSHTRDTKVGNDLVRGVSGGERKRVSIAEVAICGARFQCWDNATRGLDSATALEFIRALKTQADIGKTAATVAIYQCSQDAYDLFDKVCVLDDGYQLYFGPAKDAKKYFQDMGYYCPPRQTTADFLTSITSPTERIISKEFIEKGTRVPQTPKDMAEYWLQSESYKNLIKDIDSTLEKNTDEARNIIRDAHHAKQAKRAPPSSPYVVNYGMQVKYLLIRNFWRMKQSASVTLWQVIGNSVMAFILGSMFYKVMKKNDTSTFYFRGAAMFFAILFNAFSCLLEIFSLYETRPITEKHRTYSLYHPSADAFASVLSEMPPKLITAVCFNIIFYFLVDFRRNGGVFFFYFLINVIATFTLSHLFRCVGSLTKTLQEAMVPASMLLLAISMYTGFAIPKTKILGWSIWIWYINPLAYLFESLMINEFHDRRFPCAQYIPAGPAYQNITGTQRVCSAVGAYPGNDYVLGDDFLKESYDYEHKHKWRGFGIGMAYVVFFFFVYLILCEYNEGAKQKGEMVVFLRSKIKQLKKEGKLQEKHRPGDIENNAGSSPDSATTEKKILDDSSEGSDSSSDNAGLGLSKSEAIFHWRDLCYDVPIKGGQRRILNNVDGWVKPGTLTALMGASGAGKTTLLDCLAERVTMGVITGNIFVDGRLRDESFPRSIGYCQQQDLHLKTATVRESLRFSAYLRQPSSVSIEEKNRYVEEVIKILEMQQYSDAVVGVAGEGLNVEQRKRLTIGVELAARPKLLVFLDEPTSGLDSQTAWDTCQLMRKLATHGQAILCTIHQPSAILMQQFDRLLFLQKGGQTVYFGDLGEGCKTMIDYFESKGAHKCPPDANPAEWMLEVVGAAPGSHATQDYNEVWRNSDEYKAVQEELDWMEKNLPGRSKEPTAEEHKPFAASLYYQFKMVTIRLFQQYWRSPDYLWSKFILTIFNQVFIGFTFFKADRSLQGLQNQMLSIFMYTVIFNPILQQYLPSFVQQRDLYEARERPSRTFSWLAFFLSQIIVEIPWNILAGTIAYCIYYYAVGFYANASAAGQLHERGALFWLFSIAFYVYIGSMGLLMISFNEVAETAAHMGTLLFTMALSFCGVMATPKVMPRFWIFMYRVSPLTYMIDALLALGVANVDVKCSNYEMVKFTPPSGTTCGDYMASYIKLAGTGYLSDPSATDICSFCAVSTTNAFLATFSSHYYRRWRNYGIFICYIAFDYIAATFLYWLSRVPKKNGKISEKPKK.

Residues 1-13 show a composition bias toward basic and acidic residues; sequence MSSDIRDVEERNS. A disordered region spans residues 1–38; it reads MSSDIRDVEERNSRSSSSSSSSNSAAQSIGQHPYRGFD. Over 1–531 the chain is Cytoplasmic; that stretch reads MSSDIRDVEE…NFWRMKQSAS (531 aa). Residues 14–24 are compositionally biased toward low complexity; it reads RSSSSSSSSNS. The ABC transporter 1 domain maps to 171–420; that stretch reads LRLLKPSKEE…FQDMGYYCPP (250 aa). A helical membrane pass occupies residues 532–552; it reads VTLWQVIGNSVMAFILGSMFY. Residues 553–567 are Extracellular-facing; it reads KVMKKNDTSTFYFRG. The N-linked (GlcNAc...) asparagine glycan is linked to Asn558. The chain crosses the membrane as a helical span at residues 568–588; that stretch reads AAMFFAILFNAFSCLLEIFSL. Topologically, residues 589–617 are cytoplasmic; the sequence is YETRPITEKHRTYSLYHPSADAFASVLSE. Residues 618–638 form a helical membrane-spanning segment; it reads MPPKLITAVCFNIIFYFLVDF. Over 639–642 the chain is Extracellular; it reads RRNG. Residues 643–663 traverse the membrane as a helical segment; sequence GVFFFYFLINVIATFTLSHLF. At 664–699 the chain is on the cytoplasmic side; sequence RCVGSLTKTLQEAMVPASMLLLAISMYTGFAIPKTK. The helical transmembrane segment at 700–720 threads the bilayer; that stretch reads ILGWSIWIWYINPLAYLFESL. Topologically, residues 721–783 are extracellular; sequence MINEFHDRRF…YDYEHKHKWR (63 aa). N-linked (GlcNAc...) asparagine glycosylation occurs at Asn744. The chain crosses the membrane as a helical span at residues 784–804; that stretch reads GFGIGMAYVVFFFFVYLILCE. The Cytoplasmic segment spans residues 805-1219; sequence YNEGAKQKGE…LFQQYWRSPD (415 aa). The segment covering 829–840 has biased composition (basic and acidic residues); it reads EGKLQEKHRPGD. A disordered region spans residues 829–873; the sequence is EGKLQEKHRPGDIENNAGSSPDSATTEKKILDDSSEGSDSSSDNA. An ABC transporter 2 domain is found at 884–1127; that stretch reads FHWRDLCYDV…MIDYFESKGA (244 aa). Residue 920–927 coordinates ATP; the sequence is GASGAGKT. A helical transmembrane segment spans residues 1220-1240; sequence YLWSKFILTIFNQVFIGFTFF. Residues 1241-1312 are Extracellular-facing; the sequence is KADRSLQGLQ…VEIPWNILAG (72 aa). Residues 1313–1333 form a helical membrane-spanning segment; the sequence is TIAYCIYYYAVGFYANASAAG. The Cytoplasmic segment spans residues 1334 to 1340; that stretch reads QLHERGA. A helical membrane pass occupies residues 1341-1361; that stretch reads LFWLFSIAFYVYIGSMGLLMI. Residues 1362–1368 lie on the Extracellular side of the membrane; that stretch reads SFNEVAE. A helical membrane pass occupies residues 1369-1389; it reads TAAHMGTLLFTMALSFCGVMA. The Cytoplasmic portion of the chain corresponds to 1390–1396; it reads TPKVMPR. The helical transmembrane segment at 1397 to 1417 threads the bilayer; sequence FWIFMYRVSPLTYMIDALLAL. Topologically, residues 1418-1492 are extracellular; the sequence is GVANVDVKCS…SSHYYRRWRN (75 aa). Residues 1493 to 1513 form a helical membrane-spanning segment; the sequence is YGIFICYIAFDYIAATFLYWL. Over 1514-1529 the chain is Cytoplasmic; that stretch reads SRVPKKNGKISEKPKK.

It belongs to the ABC transporter superfamily. ABCG family. PDR (TC 3.A.1.205) subfamily.

The protein resides in the membrane. This Saccharomyces cerevisiae (strain ATCC 204508 / S288c) (Baker's yeast) protein is ATP-dependent permease PDR15 (PDR15).